We begin with the raw amino-acid sequence, 258 residues long: MVFNSTQDRQAKIVELLRDEQFLAIGRLTEHFQISVATARRDLSELHEAGLLRRTHGGAVSVTQVTQDKPNAARAVWNRAEKAAIAGVVAGMIVEGDTVLLDAGTTALEVAKKLADRRNLTFISNGLDIVEELTRGEGKSIYSVGGEYTETNRSFRGPLAEQFIRQFNVDKLILNAASIDVDRGLICTSSPVNASVARAMIEVSSRVIVVADHSKFTKSSLSVTARIEDVGVIVTDSGTRTIIETIPEKLRKKFVVAN.

The HTH deoR-type domain maps to 6 to 61 (TQDRQAKIVELLRDEQFLAIGRLTEHFQISVATARRDLSELHEAGLLRRTHGGAVS). A DNA-binding region (H-T-H motif) is located at residues 23 to 42 (LAIGRLTEHFQISVATARRD).

Its function is as follows. Represses opine catabolism and conjugal transfer of the nopaline Ti plasmid pTiC58. In Agrobacterium fabrum (strain C58 / ATCC 33970) (Agrobacterium tumefaciens (strain C58)), this protein is Transcriptional repressor AccR (accR).